A 383-amino-acid chain; its full sequence is Succinyl-diaminopimelate desuccinylase (383 aa).

A Zn(2+)-binding site is contributed by histidine 79. The active site involves aspartate 81. Residue aspartate 110 coordinates Zn(2+). Glutamate 141 serves as the catalytic Proton acceptor. Glutamate 142, glutamate 170, and histidine 355 together coordinate Zn(2+).

This sequence belongs to the peptidase M20A family. DapE subfamily. As to quaternary structure, homodimer. It depends on Zn(2+) as a cofactor. Co(2+) is required as a cofactor.

It carries out the reaction N-succinyl-(2S,6S)-2,6-diaminopimelate + H2O = (2S,6S)-2,6-diaminopimelate + succinate. Its pathway is amino-acid biosynthesis; L-lysine biosynthesis via DAP pathway; LL-2,6-diaminopimelate from (S)-tetrahydrodipicolinate (succinylase route): step 3/3. Catalyzes the hydrolysis of N-succinyl-L,L-diaminopimelic acid (SDAP), forming succinate and LL-2,6-diaminopimelate (DAP), an intermediate involved in the bacterial biosynthesis of lysine and meso-diaminopimelic acid, an essential component of bacterial cell walls. The protein is Succinyl-diaminopimelate desuccinylase of Helicobacter pylori (strain P12).